The sequence spans 36 residues: Photosystem I reaction center subunit VIII (36 aa).

The chain crosses the membrane as a helical span at residues 9 to 29; that stretch reads ILVPLVGLIFPAFSMALFFLY.

It belongs to the PsaI family.

It localises to the plastid. The protein resides in the chloroplast thylakoid membrane. May help in the organization of the PsaL subunit. This Thalassiosira pseudonana (Marine diatom) protein is Photosystem I reaction center subunit VIII.